A 1344-amino-acid polypeptide reads, in one-letter code: Protein stu1 (1344 aa).

The stretch at 93-131 (LYPLLVERLGDHKERIRAQAAQSFTDMWLAAPEEVEQCV) is one HEAT 1 repeat. The disordered stretch occupies residues 265–292 (HRPVSRAETQASRSVSRLDTHQRPASRM). Residues 508 to 544 (VTFTTRILQHVSGACQDKNVQLRLFAAGWLKTLIQKQ) form an HEAT 2 repeat. Disordered regions lie at residues 606-637 (RSLLEKDPANPNAHQSAPKDSGPSRKGLANGT), 651-847 (AAQK…STPR), 914-945 (LTENQTPQPSKVHSDSPIVSNKRVSNQDESVP), 984-1004 (PVTHQPDSVTDSSKPSGLSSS), and 1031-1054 (SLPHRSSPKHNVLGELTSNEPSQR). Composition is skewed to polar residues over residues 691–705 (VRTVPTGTSLSSLSS) and 735–747 (ATDSSTRHGNQID). The span at 748–769 (GSPSAAKSKSSTPSLKSVSSTG) shows a compositional bias: low complexity. Composition is skewed to polar residues over residues 828–847 (FSVTPISPNSVSLETPSTPR) and 914–942 (LTENQTPQPSKVHSDSPIVSNKRVSNQDE). A compositionally biased stretch (low complexity) spans 995–1004 (SSKPSGLSSS).

This sequence belongs to the CLASP family. As to quaternary structure, interacts with microtubules.

It localises to the cytoplasm. The protein localises to the cytoskeleton. The protein resides in the nucleus. Its subcellular location is the spindle. Its function is as follows. Microtubule binding protein that promotes the stabilization of dynamic microtubules. Required for mitotic spindle formation. This chain is Protein stu1 (stu1), found in Aspergillus fumigatus (strain ATCC MYA-4609 / CBS 101355 / FGSC A1100 / Af293) (Neosartorya fumigata).